A 155-amino-acid chain; its full sequence is Ribosome maturation factor RimP (155 aa).

The protein belongs to the RimP family.

Its subcellular location is the cytoplasm. Its function is as follows. Required for maturation of 30S ribosomal subunits. The protein is Ribosome maturation factor RimP of Exiguobacterium sibiricum (strain DSM 17290 / CCUG 55495 / CIP 109462 / JCM 13490 / 255-15).